The chain runs to 443 residues: Ribulose bisphosphate carboxylase large chain (443 aa).

Residue lysine 7 is modified to N6,N6,N6-trimethyllysine. Residues asparagine 116 and threonine 166 each contribute to the substrate site. Lysine 168 (proton acceptor) is an active-site residue. Lysine 170 serves as a coordination point for substrate. Positions 194, 196, and 197 each coordinate Mg(2+). An N6-carboxylysine modification is found at lysine 194. The active-site Proton acceptor is histidine 287. Positions 288, 320, and 372 each coordinate substrate.

The protein belongs to the RuBisCO large chain family. Type I subfamily. Heterohexadecamer of 8 large chains and 8 small chains; disulfide-linked. The disulfide link is formed within the large subunit homodimers. Mg(2+) serves as cofactor. The disulfide bond which can form in the large chain dimeric partners within the hexadecamer appears to be associated with oxidative stress and protein turnover.

The protein localises to the plastid. It localises to the chloroplast. It catalyses the reaction 2 (2R)-3-phosphoglycerate + 2 H(+) = D-ribulose 1,5-bisphosphate + CO2 + H2O. The catalysed reaction is D-ribulose 1,5-bisphosphate + O2 = 2-phosphoglycolate + (2R)-3-phosphoglycerate + 2 H(+). In terms of biological role, ruBisCO catalyzes two reactions: the carboxylation of D-ribulose 1,5-bisphosphate, the primary event in carbon dioxide fixation, as well as the oxidative fragmentation of the pentose substrate in the photorespiration process. Both reactions occur simultaneously and in competition at the same active site. This is Ribulose bisphosphate carboxylase large chain from Abies homolepis (Nikko fir).